The chain runs to 252 residues: Type III pantothenate kinase (252 aa).

Position 6–13 (6–13 (DIGNTSTA)) interacts with ATP. 104-107 (GADR) contributes to the substrate binding site. Asp-106 acts as the Proton acceptor in catalysis. Asp-128 serves as a coordination point for K(+). Thr-131 is an ATP binding site. Thr-183 serves as a coordination point for substrate.

Belongs to the type III pantothenate kinase family. Homodimer. Requires NH4(+) as cofactor. K(+) serves as cofactor.

It is found in the cytoplasm. The enzyme catalyses (R)-pantothenate + ATP = (R)-4'-phosphopantothenate + ADP + H(+). It participates in cofactor biosynthesis; coenzyme A biosynthesis; CoA from (R)-pantothenate: step 1/5. Its function is as follows. Catalyzes the phosphorylation of pantothenate (Pan), the first step in CoA biosynthesis. The protein is Type III pantothenate kinase of Thermus thermophilus (strain ATCC BAA-163 / DSM 7039 / HB27).